We begin with the raw amino-acid sequence, 641 residues long: MGRRSTSSTKSGKFMNPTDQARKEARKRELKKNKKQRMMVRAAVLKMKDPKQIIRDMEKLDEMEFNPVQQPQLNEKVLKDKRKKLRETFERILRLYEKENPDIYKELRKLEVEYEQKRAQLSQYFDAVKNAQHVEVESIPLPDMPHAPSNILIQDIPLPGAQPPSILKKTSAYGPPTRAVSILPLLGHGVPRLPPGRKPPGPPPGPPPPQVVQMYGRKVGFALDLPPRRRDEDMLYSPELAQRGHDDDVSSTSEDDGYPEDMDQDKHDDSTDDSDTDKSDGESDGDEFVHRDNGERDNNEEKKSGLSVRFADMPGKSRKKKKNMKELTPLQAMMLRMAGQEIPEEGREVEEFSEDDDEDDSDDSEAEKQSQKQHKEESHSDGTSTASSQQQAPPQSVPPSQIQAPPMPGPPPLGPPPAPPLRPPGPPTGLPPGPPPGAPPFLRPPGMPGLRGPLPRLLPPGPPPGRPPGPPPGPPPGLPPGPPPRGPPPRLPPPAPPGIPPPRPGMMRPPLVPPLGPAPPGLFPPAPLPNPGVLSAPPNLIQRPKADDTSAATIEKKATATISAKPQITNPKAEITRFVPTALRVRRENKGATAAPQRKSEDDSAVPLAKAAPKSGPSVPVSVQTKDDVYEAFMKEMEGLL.

Residues 1–11 (MGRRSTSSTKS) show a composition bias toward polar residues. A disordered region spans residues 1-37 (MGRRSTSSTKSGKFMNPTDQARKEARKRELKKNKKQR). A required for nuclear import region spans residues 1–45 (MGRRSTSSTKSGKFMNPTDQARKEARKRELKKNKKQRMMVRAAVL). Lys13 is subject to N6-acetyllysine. The segment covering 28-37 (RELKKNKKQR) has biased composition (basic residues). The stretch at 75 to 133 (EKVLKDKRKKLRETFERILRLYEKENPDIYKELRKLEVEYEQKRAQLSQYFDAVKNAQH) forms a coiled coil. Ser181 bears the Phosphoserine mark. A disordered region spans residues 186–213 (LGHGVPRLPPGRKPPGPPPGPPPPQVVQ). Omega-N-methylarginine is present on Arg192. Residues 192–210 (RLPPGRKPPGPPPGPPPPQ) show a composition bias toward pro residues. Positions 217–221 (RKVGF) are interaction with PP1. Tyr236 carries the post-translational modification Phosphotyrosine. Positions 236 to 552 (YSPELAQRGH…RPKADDTSAA (317 aa)) are disordered. Ser237 carries the post-translational modification Phosphoserine. Over residues 253–263 (SEDDGYPEDMD) the composition is skewed to acidic residues. Basic and acidic residues predominate over residues 276–304 (TDKSDGESDGDEFVHRDNGERDNNEEKKS). A phosphoserine mark is found at Ser279 and Ser283. The interval 306–310 (LSVRF) is interaction with PP1. Over residues 351 to 365 (EFSEDDDEDDSDDSE) the composition is skewed to acidic residues. Phosphoserine is present on residues Ser353, Ser361, and Ser364. Positions 366-380 (AEKQSQKQHKEESHS) are enriched in basic and acidic residues. Low complexity predominate over residues 386–404 (ASSQQQAPPQSVPPSQIQA). Pro residues-rich tracts occupy residues 405-447 (PPMP…PPGM), 456-504 (RLLP…PPRP), and 510-530 (PLVPPLGPAPPGLFPPAPLPN). The short motif at 455-466 (PRLLPPGPPPGR) is the PGR element. Residue Lys557 forms a Glycyl lysine isopeptide (Lys-Gly) (interchain with G-Cter in SUMO2) linkage. An N6-acetyllysine modification is found at Lys565. Lys572 is covalently cross-linked (Glycyl lysine isopeptide (Lys-Gly) (interchain with G-Cter in SUMO2)). A disordered region spans residues 587 to 623 (RENKGATAAPQRKSEDDSAVPLAKAAPKSGPSVPVSV). Ser600 is modified (phosphoserine).

In terms of assembly, interacts with PPP1CA, PPP1CB and PPP1CC. Interacts via the PGR motif with PQBP1 in the nucleus. Interacts with the WW domains of WBP4. In terms of tissue distribution, ubiquitous. Highly expressed in the heart, pancreas, kidney skeletal muscle, placenta and brain (at protein level). Weakly expressed in liver and lung.

Its subcellular location is the nucleus. The protein resides in the cytoplasm. Activates pre-mRNA splicing. May inhibit PP1 phosphatase activity. The chain is WW domain-binding protein 11 from Homo sapiens (Human).